The following is a 133-amino-acid chain: Putative pre-16S rRNA nuclease (133 aa).

It belongs to the YqgF nuclease family.

It localises to the cytoplasm. Its function is as follows. Could be a nuclease involved in processing of the 5'-end of pre-16S rRNA. The polypeptide is Putative pre-16S rRNA nuclease (Bordetella bronchiseptica (strain ATCC BAA-588 / NCTC 13252 / RB50) (Alcaligenes bronchisepticus)).